The following is a 302-amino-acid chain: uncharacterized protein (302 aa).

3 disordered regions span residues 81-100, 155-209, and 269-302; these read ETSD…ERAA, TVTG…PVNP, and LRIE…ALLN. The segment covering 196 to 209 has biased composition (low complexity); sequence PSLPSSLVSSPVNP.

This is an uncharacterized protein from Ictalurid herpesvirus 1 (strain Auburn) (IcHV-1).